A 176-amino-acid chain; its full sequence is Nuclear transcription factor Y subunit B-10 (176 aa).

Residues 1 to 15 (MAESQTGGGGGGSHE) show a composition bias toward gly residues. The tract at residues 1-29 (MAESQTGGGGGGSHESGGDQSPRSLNVRE) is disordered. Position 2 is an N-acetylalanine (A2). Residues 34 to 40 (LPIANIS) mediate DNA binding. Residues 61–72 (MQECVSEFISFV) are subunit association domain (SAD). Residues 121-176 (GDTKGSGKGGESSAKRDGQPSQVSQFSQVPQQGSFSQGPYGNSQGSNMMVQMPGTE) form a disordered region. A compositionally biased stretch (low complexity) spans 139–159 (QPSQVSQFSQVPQQGSFSQGP). The segment covering 160–169 (YGNSQGSNMM) has biased composition (polar residues).

Belongs to the NFYB/HAP3 subunit family. As to quaternary structure, heterotrimeric transcription factor composed of three components, NF-YA, NF-YB and NF-YC. NF-YB and NF-YC must interact and dimerize for NF-YA association and DNA binding. In terms of tissue distribution, expressed in the whole plant, except roots.

It localises to the nucleus. Functionally, component of the NF-Y/HAP transcription factor complex. The NF-Y complex stimulates the transcription of various genes by recognizing and binding to a CCAAT motif in promoters. In Arabidopsis thaliana (Mouse-ear cress), this protein is Nuclear transcription factor Y subunit B-10 (NFYB10).